The sequence spans 487 residues: ATP synthase subunit beta 1 (487 aa).

162-169 is a binding site for ATP; that stretch reads GGAGVGKT.

This sequence belongs to the ATPase alpha/beta chains family. In terms of assembly, F-type ATPases have 2 components, CF(1) - the catalytic core - and CF(0) - the membrane proton channel. CF(1) has five subunits: alpha(3), beta(3), gamma(1), delta(1), epsilon(1). CF(0) has three main subunits: a(1), b(2) and c(9-12). The alpha and beta chains form an alternating ring which encloses part of the gamma chain. CF(1) is attached to CF(0) by a central stalk formed by the gamma and epsilon chains, while a peripheral stalk is formed by the delta and b chains.

The protein resides in the cell inner membrane. It catalyses the reaction ATP + H2O + 4 H(+)(in) = ADP + phosphate + 5 H(+)(out). Functionally, produces ATP from ADP in the presence of a proton gradient across the membrane. The catalytic sites are hosted primarily by the beta subunits. The protein is ATP synthase subunit beta 1 of Gluconobacter oxydans (strain 621H) (Gluconobacter suboxydans).